Reading from the N-terminus, the 1092-residue chain is SUMO-specific isopeptidase USPL1 (1092 aa).

2 disordered regions span residues valine 145 to serine 168 and threonine 185 to threonine 207. 2 stretches are compositionally biased toward polar residues: residues glutamate 148–isoleucine 163 and glycine 197–cysteine 206. In terms of domain architecture, USP spans valine 227–lysine 500. Cysteine 236 acts as the Nucleophile in catalysis. Residues cysteine 236–valine 495 are SUMO-binding. Residue histidine 456 is the Proton acceptor of the active site. 3 disordered regions span residues leucine 713 to glutamate 749, glycine 797 to cysteine 859, and alanine 904 to asparagine 930. The span at alanine 732–lysine 748 shows a compositional bias: polar residues. Residues histidine 810–alanine 819 are compositionally biased toward basic residues. The segment covering lysine 821–proline 832 has biased composition (pro residues). Serine 909 is subject to Phosphoserine.

It belongs to the peptidase C19 family. Interacts with ELL.

Its subcellular location is the nucleus. It is found in the cajal body. SUMO-specific isopeptidase involved in protein desumoylation. Specifically binds SUMO proteins with a higher affinity for SUMO2 and SUMO3 which it cleaves more efficiently. Also able to process full-length SUMO proteins to their mature forms. Plays a key role in RNA polymerase-II-mediated snRNA transcription in the Cajal bodies. Is a component of complexes that can bind to U snRNA genes. This chain is SUMO-specific isopeptidase USPL1 (USPL1), found in Homo sapiens (Human).